The primary structure comprises 420 residues: L-rhamnose isomerase (420 aa).

Positions 264, 296, and 298 each coordinate Mn(2+).

Belongs to the rhamnose isomerase family. Requires Mn(2+) as cofactor.

It localises to the cytoplasm. The catalysed reaction is L-rhamnopyranose = L-rhamnulose. The protein operates within carbohydrate degradation; L-rhamnose degradation; glycerone phosphate from L-rhamnose: step 1/3. Catalyzes the interconversion of L-rhamnose and L-rhamnulose. The protein is L-rhamnose isomerase of Listeria innocua serovar 6a (strain ATCC BAA-680 / CLIP 11262).